A 619-amino-acid chain; its full sequence is Manganese lipoxygenase (619 aa).

Positions methionine 1–alanine 16 are cleaved as a signal peptide. N-linked (GlcNAc...) asparagine glycans are attached at residues asparagine 32, asparagine 42, asparagine 62, asparagine 86, asparagine 164, and asparagine 229. In terms of domain architecture, Lipoxygenase spans threonine 55–valine 619. Residues histidine 298, histidine 303, histidine 483, and asparagine 487 each contribute to the Mn(2+) site. N-linked (GlcNAc...) asparagine glycans are attached at residues asparagine 515 and asparagine 549. Valine 619 is a Mn(2+) binding site.

The protein belongs to the lipoxygenase family. Manganese lipoxygenase subfamily. Mn(2+) is required as a cofactor.

The protein resides in the secreted. The enzyme catalyses (9Z,12Z)-octadecadienoate + O2 = (9S)-hydroperoxy-(10E,12Z)-octadecadienoate. It carries out the reaction (9Z,12Z)-octadecadienoate + O2 = (11S)-hydroperoxy-(9Z,12Z)-octadecadienoate. It catalyses the reaction (9Z,12Z)-octadecadienoate + O2 = (13R)-hydroperoxy-(9Z,11E)-octadecadienoate. The catalysed reaction is (9Z,12Z,15Z)-octadecatrienoate + O2 = (9S)-hydroperoxy-(10E,12Z,15Z)-octadecatrienoate. The enzyme catalyses (9Z,12Z,15Z)-octadecatrienoate + O2 = (11R)-hydroperoxy-(9Z,12Z,15Z)-octadecatrienoate. It carries out the reaction (9Z,12Z,15Z)-octadecatrienoate + O2 = (13R)-hydroperoxy-(9Z,11E,15Z)-octadecatrienoate. It catalyses the reaction (9S)-hydroperoxy-(10E,12Z,15Z)-octadecatrienoate + O2 = (9S,16S)-dihydroperoxy-(10E,12Z,14E)-octadecatrienoate. Functionally, lipoxygenase that metabolizes linoleic and alpha-linolenic acids to 9S-, 11- and 13R-hydroperoxy fatty acids. At the end of lipoxygenation, the intermediate product 11S-HPODE from linoleic acid is then transformed into 9S-HPODE and 13R-HPODE as the final products. The intermediate product 11R-HPOTrE from alpha-linolenic acid is transformed into 9S-HPOTrE and 13R-HPOTrE as the final products. 9S-HPOTrE is further oxidized by the enzyme to 9S,16S-DiHPOTrE as the end product. The sequence is that of Manganese lipoxygenase from Pyricularia oryzae (strain 70-15 / ATCC MYA-4617 / FGSC 8958) (Rice blast fungus).